The following is a 238-amino-acid chain: Probable RNA/DNA demethylase ALKBH6 (238 aa).

Residues 96 to 227 (PANHVLVNQY…RVSLTIRRVP (132 aa)) enclose the Fe2OG dioxygenase domain. 2-oxoglutarate-binding residues include asparagine 103 and tyrosine 105. Residues histidine 114, aspartate 116, and histidine 182 each contribute to the Fe cation site. Arginine 218 and serine 220 together coordinate 2-oxoglutarate.

This sequence belongs to the alkB family. Interacts with VCPKMT. It depends on Fe(2+) as a cofactor.

It is found in the cytoplasm. The protein localises to the nucleus. Functionally, probable Fe(2+)/2-oxoglutarate-dependent dioxygenase involved in oxidative demethylation of nucleic acids. Binds nucleic acids with a preference for ssDNA or ssRNA to other types of DNAs. May play a role in nucleic acid damage repair. The sequence is that of Probable RNA/DNA demethylase ALKBH6 (Alkbh6) from Mus musculus (Mouse).